We begin with the raw amino-acid sequence, 316 residues long: 4-diphosphocytidyl-2-C-methyl-D-erythritol kinase (316 aa).

Lys14 is an active-site residue. An ATP-binding site is contributed by 96-106 (PMGAGLGGGSS). Asp138 is a catalytic residue.

The protein belongs to the GHMP kinase family. IspE subfamily.

The enzyme catalyses 4-CDP-2-C-methyl-D-erythritol + ATP = 4-CDP-2-C-methyl-D-erythritol 2-phosphate + ADP + H(+). Its pathway is isoprenoid biosynthesis; isopentenyl diphosphate biosynthesis via DXP pathway; isopentenyl diphosphate from 1-deoxy-D-xylulose 5-phosphate: step 3/6. Its function is as follows. Catalyzes the phosphorylation of the position 2 hydroxy group of 4-diphosphocytidyl-2C-methyl-D-erythritol. This is 4-diphosphocytidyl-2-C-methyl-D-erythritol kinase from Solibacter usitatus (strain Ellin6076).